Consider the following 1023-residue polypeptide: Lon protease homolog (1023 aa).

515–522 (GPPGVGKT) provides a ligand contact to ATP. Residues 810 to 1003 (TNMIGVINGL…IEIITDPNVI (194 aa)) form the Lon proteolytic domain. Ser906 is an active-site residue.

Belongs to the peptidase S16 family.

The protein is Lon protease homolog of Acanthamoeba polyphaga (Amoeba).